The sequence spans 259 residues: MQQMVPASGYDRAITIFSPEGRLYQVEYAREAVRRGTTAVGIKCKDGVVLAVDRRITSKLIDVSSIEKIFQIDDHIVAATSGLVADARVLIDRARIEAQMNRVSYGEAITVEALAKKICDIKQAYTQHGGARPFGLALLITGIDRHSARLFETDPSGALIEYKATAIGSGRPIAMEVLESKYDENMTVSEGMELALYALSKTTEELKPENIDMAIIKDSGKLVEKISVDEIEKIVKAVYEKVKAEEEEAEKNKGEEDSE.

The protein belongs to the peptidase T1A family. As to quaternary structure, the 20S proteasome core is composed of 14 alpha and 14 beta subunits that assemble into four stacked heptameric rings, resulting in a barrel-shaped structure. The two inner rings, each composed of seven catalytic beta subunits, are sandwiched by two outer rings, each composed of seven alpha subunits. The catalytic chamber with the active sites is on the inside of the barrel. Has a gated structure, the ends of the cylinder being occluded by the N-termini of the alpha-subunits. Is capped at one or both ends by the proteasome regulatory ATPase, PAN.

It is found in the cytoplasm. The formation of the proteasomal ATPase PAN-20S proteasome complex, via the docking of the C-termini of PAN into the intersubunit pockets in the alpha-rings, triggers opening of the gate for substrate entry. Interconversion between the open-gate and close-gate conformations leads to a dynamic regulation of the 20S proteasome proteolysis activity. Functionally, component of the proteasome core, a large protease complex with broad specificity involved in protein degradation. The sequence is that of Proteasome subunit alpha from Methanococcus maripaludis (strain DSM 14266 / JCM 13030 / NBRC 101832 / S2 / LL).